Reading from the N-terminus, the 195-residue chain is Imidazoleglycerol-phosphate dehydratase (195 aa).

Belongs to the imidazoleglycerol-phosphate dehydratase family.

The protein resides in the cytoplasm. The enzyme catalyses D-erythro-1-(imidazol-4-yl)glycerol 3-phosphate = 3-(imidazol-4-yl)-2-oxopropyl phosphate + H2O. The protein operates within amino-acid biosynthesis; L-histidine biosynthesis; L-histidine from 5-phospho-alpha-D-ribose 1-diphosphate: step 6/9. The polypeptide is Imidazoleglycerol-phosphate dehydratase (Desulfosudis oleivorans (strain DSM 6200 / JCM 39069 / Hxd3) (Desulfococcus oleovorans)).